Here is a 116-residue protein sequence, read N- to C-terminus: Large ribosomal subunit protein uL18 (116 aa).

The protein belongs to the universal ribosomal protein uL18 family. In terms of assembly, part of the 50S ribosomal subunit; part of the 5S rRNA/L5/L18/L25 subcomplex. Contacts the 5S and 23S rRNAs.

In terms of biological role, this is one of the proteins that bind and probably mediate the attachment of the 5S RNA into the large ribosomal subunit, where it forms part of the central protuberance. This Acinetobacter baumannii (strain AB307-0294) protein is Large ribosomal subunit protein uL18.